A 468-amino-acid chain; its full sequence is Sulfate adenylyltransferase subunit 1 (468 aa).

Residues 22-239 (KELLRFLTCG…TVEIASDKNA (218 aa)) enclose the tr-type G domain. The tract at residues 31 to 38 (GSVDDGKS) is G1. 31-38 (GSVDDGKS) is a GTP binding site. The interval 89–93 (GITID) is G2. The G3 stretch occupies residues 110–113 (DTPG). Residues 110 to 114 (DTPGH) and 165 to 168 (NKMD) each bind GTP. Residues 165–168 (NKMD) form a G4 region. Residues 202–204 (SAL) are G5.

This sequence belongs to the TRAFAC class translation factor GTPase superfamily. Classic translation factor GTPase family. CysN/NodQ subfamily. As to quaternary structure, heterodimer composed of CysD, the smaller subunit, and CysN.

It catalyses the reaction sulfate + ATP + H(+) = adenosine 5'-phosphosulfate + diphosphate. Its pathway is sulfur metabolism; hydrogen sulfide biosynthesis; sulfite from sulfate: step 1/3. With CysD forms the ATP sulfurylase (ATPS) that catalyzes the adenylation of sulfate producing adenosine 5'-phosphosulfate (APS) and diphosphate, the first enzymatic step in sulfur assimilation pathway. APS synthesis involves the formation of a high-energy phosphoric-sulfuric acid anhydride bond driven by GTP hydrolysis by CysN coupled to ATP hydrolysis by CysD. The protein is Sulfate adenylyltransferase subunit 1 of Teredinibacter turnerae (strain ATCC 39867 / T7901).